Here is a 115-residue protein sequence, read N- to C-terminus: NADH-ubiquinone oxidoreductase chain 3 (115 aa).

The next 3 membrane-spanning stretches (helical) occupy residues 4–24 (ILTL…AFWL), 55–75 (FFLV…LLPL), and 84–104 (SYLT…GLAY).

It belongs to the complex I subunit 3 family. As to quaternary structure, core subunit of respiratory chain NADH dehydrogenase (Complex I) which is composed of 45 different subunits. Interacts with TMEM186. Interacts with TMEM242.

Its subcellular location is the mitochondrion inner membrane. The enzyme catalyses a ubiquinone + NADH + 5 H(+)(in) = a ubiquinol + NAD(+) + 4 H(+)(out). Core subunit of the mitochondrial membrane respiratory chain NADH dehydrogenase (Complex I) which catalyzes electron transfer from NADH through the respiratory chain, using ubiquinone as an electron acceptor. Essential for the catalytic activity of complex I. The sequence is that of NADH-ubiquinone oxidoreductase chain 3 from Necromys lactens (Rufous-bellied bolo mouse).